Here is a 27-residue protein sequence, read N- to C-terminus: Protein YqiM (27 aa).

This is Protein YqiM from Escherichia coli (strain K12).